The following is a 145-amino-acid chain: Large-conductance mechanosensitive channel (145 aa).

2 helical membrane passes run 30 to 50 (VAVV…AWLM) and 74 to 94 (GELV…FLII).

The protein belongs to the MscL family. In terms of assembly, homopentamer.

Its subcellular location is the cell inner membrane. In terms of biological role, channel that opens in response to stretch forces in the membrane lipid bilayer. May participate in the regulation of osmotic pressure changes within the cell. This chain is Large-conductance mechanosensitive channel, found in Synechocystis sp. (strain ATCC 27184 / PCC 6803 / Kazusa).